The following is a 514-amino-acid chain: Chromosomal replication initiator protein DnaA (514 aa).

The domain I, interacts with DnaA modulators stretch occupies residues 1 to 90; it reads MSVELWQQCV…KRSRTPRAAI (90 aa). The segment at 91 to 177 is domain II; sequence VPSQTHVAPP…QVEGALKHTS (87 aa). Positions 178–394 are domain III, AAA+ region; it reads YLNRTFTFEN…GALKRVIAHS (217 aa). ATP is bound by residues glycine 222, glycine 224, lysine 225, and threonine 226. The domain IV, binds dsDNA stretch occupies residues 395 to 514; it reads HFMGRPITIE…YKNLLRTLTT (120 aa).

The protein belongs to the DnaA family. Oligomerizes as a right-handed, spiral filament on DNA at oriC.

The protein resides in the cytoplasm. Plays an essential role in the initiation and regulation of chromosomal replication. ATP-DnaA binds to the origin of replication (oriC) to initiate formation of the DNA replication initiation complex once per cell cycle. Binds the DnaA box (a 9 base pair repeat at the origin) and separates the double-stranded (ds)DNA. Forms a right-handed helical filament on oriC DNA; dsDNA binds to the exterior of the filament while single-stranded (ss)DNA is stabiized in the filament's interior. The ATP-DnaA-oriC complex binds and stabilizes one strand of the AT-rich DNA unwinding element (DUE), permitting loading of DNA polymerase. After initiation quickly degrades to an ADP-DnaA complex that is not apt for DNA replication. Binds acidic phospholipids. This Pseudomonas aeruginosa (strain LESB58) protein is Chromosomal replication initiator protein DnaA.